We begin with the raw amino-acid sequence, 102 residues long: Small ribosomal subunit protein uS10 (102 aa).

Belongs to the universal ribosomal protein uS10 family. As to quaternary structure, part of the 30S ribosomal subunit.

Involved in the binding of tRNA to the ribosomes. The sequence is that of Small ribosomal subunit protein uS10 from Thermobifida fusca (strain YX).